A 490-amino-acid chain; its full sequence is 3-octaprenyl-4-hydroxybenzoate carboxy-lyase (490 aa).

Asparagine 172 serves as a coordination point for Mn(2+). Prenylated FMN-binding positions include 175 to 177 (IYR), 189 to 191 (RWL), and 194 to 195 (RG). Glutamate 238 lines the Mn(2+) pocket. The active-site Proton donor is aspartate 287.

It belongs to the UbiD family. In terms of assembly, homohexamer. It depends on prenylated FMN as a cofactor. Mn(2+) is required as a cofactor.

It localises to the cell membrane. The enzyme catalyses a 4-hydroxy-3-(all-trans-polyprenyl)benzoate + H(+) = a 2-(all-trans-polyprenyl)phenol + CO2. It functions in the pathway cofactor biosynthesis; ubiquinone biosynthesis. Its function is as follows. Catalyzes the decarboxylation of 3-octaprenyl-4-hydroxy benzoate to 2-octaprenylphenol, an intermediate step in ubiquinone biosynthesis. This Saccharophagus degradans (strain 2-40 / ATCC 43961 / DSM 17024) protein is 3-octaprenyl-4-hydroxybenzoate carboxy-lyase.